The sequence spans 215 residues: Protein-L-isoaspartate O-methyltransferase (215 aa).

The active site involves Ser62.

This sequence belongs to the methyltransferase superfamily. L-isoaspartyl/D-aspartyl protein methyltransferase family.

The protein resides in the cytoplasm. The catalysed reaction is [protein]-L-isoaspartate + S-adenosyl-L-methionine = [protein]-L-isoaspartate alpha-methyl ester + S-adenosyl-L-homocysteine. Its function is as follows. Catalyzes the methyl esterification of L-isoaspartyl residues in peptides and proteins that result from spontaneous decomposition of normal L-aspartyl and L-asparaginyl residues. It plays a role in the repair and/or degradation of damaged proteins. The protein is Protein-L-isoaspartate O-methyltransferase of Nitratidesulfovibrio vulgaris (strain DSM 19637 / Miyazaki F) (Desulfovibrio vulgaris).